A 430-amino-acid chain; its full sequence is Dihydroorotase (430 aa).

Zn(2+) is bound by residues H57 and H59. Substrate is bound by residues 59–61 (HLR) and N91. D151, H178, and H231 together coordinate Zn(2+). N277 serves as a coordination point for substrate. Residue D304 participates in Zn(2+) binding. Residue D304 is part of the active site. Substrate-binding positions include H308 and 322-323 (PG).

The protein belongs to the metallo-dependent hydrolases superfamily. DHOase family. Class I DHOase subfamily. It depends on Zn(2+) as a cofactor.

It catalyses the reaction (S)-dihydroorotate + H2O = N-carbamoyl-L-aspartate + H(+). The protein operates within pyrimidine metabolism; UMP biosynthesis via de novo pathway; (S)-dihydroorotate from bicarbonate: step 3/3. Catalyzes the reversible cyclization of carbamoyl aspartate to dihydroorotate. The polypeptide is Dihydroorotase (Mycobacterium tuberculosis (strain ATCC 25618 / H37Rv)).